Reading from the N-terminus, the 156-residue chain is Protein Smg homolog (156 aa).

Belongs to the Smg family.

The chain is Protein Smg homolog from Halorhodospira halophila (strain DSM 244 / SL1) (Ectothiorhodospira halophila (strain DSM 244 / SL1)).